Here is a 247-residue protein sequence, read N- to C-terminus: ATP synthase subunit a, chloroplastic (247 aa).

Helical transmembrane passes span 38 to 58 (QVLI…TIAV), 95 to 115 (VPFI…GALF), 134 to 154 (INTT…AGLT), 199 to 219 (LVVV…VMFL), and 220 to 240 (GLFT…AYIG).

It belongs to the ATPase A chain family. In terms of assembly, F-type ATPases have 2 components, CF(1) - the catalytic core - and CF(0) - the membrane proton channel. CF(1) has five subunits: alpha(3), beta(3), gamma(1), delta(1), epsilon(1). CF(0) has four main subunits: a, b, b' and c.

The protein localises to the plastid. The protein resides in the chloroplast thylakoid membrane. Functionally, key component of the proton channel; it plays a direct role in the translocation of protons across the membrane. In Piper cenocladum (Ant piper), this protein is ATP synthase subunit a, chloroplastic.